The following is a 186-amino-acid chain: Lipid A palmitoyltransferase PagP (186 aa).

Residues 1–25 (MNVSKYVAIFSFVFIQLISVGKVFA) form the signal peptide. Residues H58, D101, and S102 contribute to the active site.

The protein belongs to the lipid A palmitoyltransferase family. As to quaternary structure, homodimer.

Its subcellular location is the cell outer membrane. It catalyses the reaction lipid A (E. coli) + a 1-hexadecanoyl-2-acyl-sn-glycero-3-phosphocholine = hepta-acyl lipid A (E. coli) + a 2-acyl-sn-glycero-3-phosphocholine. The catalysed reaction is lipid IIA + a 1-hexadecanoyl-2-acyl-sn-glycero-3-phosphocholine = lipid IIB + a 2-acyl-sn-glycero-3-phosphocholine. The enzyme catalyses lipid IVA (E. coli) + a 1-hexadecanoyl-2-acyl-sn-glycero-3-phosphocholine = lipid IVB (E. coli) + a 2-acyl-sn-glycero-3-phosphocholine. Transfers a palmitate residue from the sn-1 position of a phospholipid to the N-linked hydroxymyristate on the proximal unit of lipid A or its precursors. This chain is Lipid A palmitoyltransferase PagP, found in Escherichia coli (strain ATCC 55124 / KO11FL).